Reading from the N-terminus, the 1165-residue chain is ATP-dependent helicase/deoxyribonuclease subunit B (1165 aa).

The UvrD-like helicase ATP-binding domain occupies 1–298; that stretch reads MALRFILGRA…AHLEREFFRR (298 aa). 8–15 contributes to the ATP binding site; sequence GRAGTGKT. Residues 279–584 enclose the UvrD-like helicase C-terminal domain; that stretch reads PARFRANPAL…QLALIPPALD (306 aa). Residues C800, C1119, C1122, and C1128 each contribute to the [4Fe-4S] cluster site.

The protein belongs to the helicase family. AddB/RexB type 1 subfamily. Heterodimer of AddA and AddB. Mg(2+) is required as a cofactor. The cofactor is [4Fe-4S] cluster.

The heterodimer acts as both an ATP-dependent DNA helicase and an ATP-dependent, dual-direction single-stranded exonuclease. Recognizes the chi site generating a DNA molecule suitable for the initiation of homologous recombination. The AddB subunit has 5' -&gt; 3' nuclease activity but not helicase activity. The chain is ATP-dependent helicase/deoxyribonuclease subunit B from Desulforudis audaxviator (strain MP104C).